A 446-amino-acid chain; its full sequence is Probable glucan endo-1,3-beta-glucosidase eglC (446 aa).

Residues 1–18 (MQFTHLVALALALATSEA) form the signal peptide. E128 acts as the Proton donor in catalysis. Residue N183 is glycosylated (N-linked (GlcNAc...) asparagine). E239 acts as the Nucleophile in catalysis. N-linked (GlcNAc...) asparagine glycans are attached at residues N364 and N370. Residues 393–416 (SSGAGASGASGQSSSSTGSSSAPS) are disordered. Over residues 401–416 (ASGQSSSSTGSSSAPS) the composition is skewed to low complexity. A lipid anchor (GPI-anchor amidated asparagine) is attached at N423. The propeptide at 424–446 (AASGLSGSIFGAVVAVCLALAAL) is removed in mature form.

This sequence belongs to the glycosyl hydrolase 17 family. In terms of processing, the GPI-anchor is attached to the protein in the endoplasmic reticulum and serves to target the protein to the cell surface. There, the glucosamine-inositol phospholipid moiety is cleaved off and the GPI-modified mannoprotein is covalently attached via its lipidless GPI glycan remnant to the 1,6-beta-glucan of the outer cell wall layer.

The protein resides in the cell membrane. The protein localises to the secreted. Its subcellular location is the cell wall. It carries out the reaction Hydrolysis of (1-&gt;3)-beta-D-glucosidic linkages in (1-&gt;3)-beta-D-glucans.. Glucanases play a role in cell expansion during growth, in cell-cell fusion during mating, and in spore release during sporulation. This enzyme may be involved in beta-glucan degradation and also function biosynthetically as a transglycosylase. The polypeptide is Probable glucan endo-1,3-beta-glucosidase eglC (eglC) (Aspergillus fumigatus (strain ATCC MYA-4609 / CBS 101355 / FGSC A1100 / Af293) (Neosartorya fumigata)).